Consider the following 177-residue polypeptide: Cell division inhibitor SulA (177 aa).

The tract at residues 112-118 (ALASGNY) is ftsZ binding. Positions 170-177 (KIHSIHYH) are lon protease binding.

It belongs to the SulA family. As to quaternary structure, interacts with FtsZ. In terms of processing, is rapidly cleaved and degraded by the Lon protease once DNA damage is repaired.

Component of the SOS system and an inhibitor of cell division. Accumulation of SulA causes rapid cessation of cell division and the appearance of long, non-septate filaments. In the presence of GTP, binds a polymerization-competent form of FtsZ in a 1:1 ratio, thus inhibiting FtsZ polymerization and therefore preventing it from participating in the assembly of the Z ring. This mechanism prevents the premature segregation of damaged DNA to daughter cells during cell division. The sequence is that of Cell division inhibitor SulA from Photorhabdus laumondii subsp. laumondii (strain DSM 15139 / CIP 105565 / TT01) (Photorhabdus luminescens subsp. laumondii).